Here is a 432-residue protein sequence, read N- to C-terminus: Tyrosine-protein phosphatase non-receptor type 1 (432 aa).

Residue Met1 is modified to N-acetylmethionine. The Tyrosine-protein phosphatase domain maps to 3 to 277 (MEKEFEEIDK…RFSYLAVIEG (275 aa)). Residue Tyr20 is modified to Phosphotyrosine. Ser50 is subject to Phosphoserine; by CLK1, CLK2 and PKB/AKT1 or PKB/AKT2. Tyr66 is subject to Phosphotyrosine; by EGFR. Residues Asp181 and 215–221 (CSAGIGR) each bind substrate. Cys215 functions as the Phosphocysteine intermediate in the catalytic mechanism. Cysteine persulfide is present on Cys215. The residue at position 215 (Cys215) is an S-nitrosocysteine; in reversibly inhibited form. Phosphoserine; by CLK1 and CLK2 is present on residues Ser242 and Ser243. Gln262 contributes to the substrate binding site. 2 disordered regions span residues 297–322 (EDLD…PHNG) and 335–399 (SEET…EEHK). Phosphoserine is present on residues Ser335, Ser362, and Ser364. Residues 354 to 364 (SSAMHSVSSMS) show a composition bias toward low complexity. Residue Thr367 is modified to Phosphothreonine.

This sequence belongs to the protein-tyrosine phosphatase family. Non-receptor class 1 subfamily. In terms of assembly, interacts with EPHA3 (phosphorylated); dephosphorylates EPHA3 and may regulate its trafficking and function. Interacts with MET. Interacts with NCK1. Ser-50 is the major site of phosphorylation as compared to Ser-242 and Ser-243. Activated by phosphorylation at Ser-50. Post-translationally, S-nitrosylation of Cys-215 inactivates the enzyme activity. In terms of processing, sulfhydration at Cys-215 following endoplasmic reticulum stress inactivates the enzyme activity, promoting EIF2AK3/PERK activity. Most abundant in testis. Also found in kidney, spleen, muscle, liver, heart and brain.

It is found in the endoplasmic reticulum membrane. It catalyses the reaction O-phospho-L-tyrosyl-[protein] + H2O = L-tyrosyl-[protein] + phosphate. In terms of biological role, tyrosine-protein phosphatase which acts as a regulator of endoplasmic reticulum unfolded protein response. Mediates dephosphorylation of EIF2AK3/PERK; inactivating the protein kinase activity of EIF2AK3/PERK. May play an important role in CKII- and p60c-src-induced signal transduction cascades. May regulate the EFNA5-EPHA3 signaling pathway which modulates cell reorganization and cell-cell repulsion. May also regulate the hepatocyte growth factor receptor signaling pathway through dephosphorylation of MET. This chain is Tyrosine-protein phosphatase non-receptor type 1 (Ptpn1), found in Mus musculus (Mouse).